A 44-amino-acid chain; its full sequence is Small ribosomal subunit protein eS7 (44 aa).

A compositionally biased stretch (basic residues) spans 18–34 (KPTRKSRIKNKQKRPRS). The interval 18–44 (KPTRKSRIKNKQKRPRSRTLTAVHDAI) is disordered.

This sequence belongs to the eukaryotic ribosomal protein eS7 family. As to quaternary structure, component of the small ribosomal subunit.

Its subcellular location is the cytoplasm. The protein resides in the cytoskeleton. The protein localises to the microtubule organizing center. It localises to the centrosome. It is found in the nucleus. In terms of biological role, component of the small ribosomal subunit. The ribosome is a large ribonucleoprotein complex responsible for the synthesis of proteins in the cell. Required for rRNA maturation. In Salmo salar (Atlantic salmon), this protein is Small ribosomal subunit protein eS7 (rps7).